The chain runs to 37 residues: MKVKPSVKPICEKCKIIKRKGKVMVICENPKHKQVQG.

Belongs to the bacterial ribosomal protein bL36 family.

The sequence is that of Large ribosomal subunit protein bL36 from Syntrophomonas wolfei subsp. wolfei (strain DSM 2245B / Goettingen).